Reading from the N-terminus, the 156-residue chain is ATP synthase subunit b (156 aa).

Residues 5–27 (ITLIGQMITFAIFVGFTMKFVWP) form a helical membrane-spanning segment.

Belongs to the ATPase B chain family. As to quaternary structure, F-type ATPases have 2 components, F(1) - the catalytic core - and F(0) - the membrane proton channel. F(1) has five subunits: alpha(3), beta(3), gamma(1), delta(1), epsilon(1). F(0) has three main subunits: a(1), b(2) and c(10-14). The alpha and beta chains form an alternating ring which encloses part of the gamma chain. F(1) is attached to F(0) by a central stalk formed by the gamma and epsilon chains, while a peripheral stalk is formed by the delta and b chains.

Its subcellular location is the cell inner membrane. In terms of biological role, f(1)F(0) ATP synthase produces ATP from ADP in the presence of a proton or sodium gradient. F-type ATPases consist of two structural domains, F(1) containing the extramembraneous catalytic core and F(0) containing the membrane proton channel, linked together by a central stalk and a peripheral stalk. During catalysis, ATP synthesis in the catalytic domain of F(1) is coupled via a rotary mechanism of the central stalk subunits to proton translocation. Its function is as follows. Component of the F(0) channel, it forms part of the peripheral stalk, linking F(1) to F(0). This is ATP synthase subunit b from Francisella philomiragia subsp. philomiragia (strain ATCC 25017 / CCUG 19701 / FSC 153 / O#319-036).